The sequence spans 171 residues: Methylated-DNA--protein-cysteine methyltransferase (171 aa).

The active-site Nucleophile; methyl group acceptor is Cys139.

It belongs to the MGMT family.

Its subcellular location is the cytoplasm. It catalyses the reaction a 6-O-methyl-2'-deoxyguanosine in DNA + L-cysteinyl-[protein] = S-methyl-L-cysteinyl-[protein] + a 2'-deoxyguanosine in DNA. The enzyme catalyses a 4-O-methyl-thymidine in DNA + L-cysteinyl-[protein] = a thymidine in DNA + S-methyl-L-cysteinyl-[protein]. Its function is as follows. Involved in the cellular defense against the biological effects of O6-methylguanine (O6-MeG) and O4-methylthymine (O4-MeT) in DNA. Repairs the methylated nucleobase in DNA by stoichiometrically transferring the methyl group to a cysteine residue in the enzyme. This is a suicide reaction: the enzyme is irreversibly inactivated. The chain is Methylated-DNA--protein-cysteine methyltransferase from Shigella flexneri.